Reading from the N-terminus, the 430-residue chain is Enolase (430 aa).

Residue Q167 coordinates (2R)-2-phosphoglycerate. E209 acts as the Proton donor in catalysis. Positions 245, 286, and 313 each coordinate Mg(2+). (2R)-2-phosphoglycerate contacts are provided by K338, R367, S368, and K389. Residue K338 is the Proton acceptor of the active site.

It belongs to the enolase family. Mg(2+) is required as a cofactor.

It is found in the cytoplasm. Its subcellular location is the secreted. The protein localises to the cell surface. The catalysed reaction is (2R)-2-phosphoglycerate = phosphoenolpyruvate + H2O. It participates in carbohydrate degradation; glycolysis; pyruvate from D-glyceraldehyde 3-phosphate: step 4/5. Catalyzes the reversible conversion of 2-phosphoglycerate (2-PG) into phosphoenolpyruvate (PEP). It is essential for the degradation of carbohydrates via glycolysis. The polypeptide is Enolase (Synechococcus sp. (strain CC9605)).